The primary structure comprises 144 residues: Small ribosomal subunit protein uS19 (144 aa).

Belongs to the universal ribosomal protein uS19 family.

Functionally, protein S19 forms a complex with S13 that binds strongly to the 16S ribosomal RNA. The polypeptide is Small ribosomal subunit protein uS19 (Hyperthermus butylicus (strain DSM 5456 / JCM 9403 / PLM1-5)).